Here is a 417-residue protein sequence, read N- to C-terminus: Serine hydroxymethyltransferase (417 aa).

(6S)-5,6,7,8-tetrahydrofolate-binding positions include L121 and 125–127 (GHL). Position 229 is an N6-(pyridoxal phosphate)lysine (K229). 355–357 (SPF) contacts (6S)-5,6,7,8-tetrahydrofolate.

Belongs to the SHMT family. As to quaternary structure, homodimer. The cofactor is pyridoxal 5'-phosphate.

The protein localises to the cytoplasm. The enzyme catalyses (6R)-5,10-methylene-5,6,7,8-tetrahydrofolate + glycine + H2O = (6S)-5,6,7,8-tetrahydrofolate + L-serine. Its pathway is one-carbon metabolism; tetrahydrofolate interconversion. It participates in amino-acid biosynthesis; glycine biosynthesis; glycine from L-serine: step 1/1. Its function is as follows. Catalyzes the reversible interconversion of serine and glycine with tetrahydrofolate (THF) serving as the one-carbon carrier. This reaction serves as the major source of one-carbon groups required for the biosynthesis of purines, thymidylate, methionine, and other important biomolecules. Also exhibits THF-independent aldolase activity toward beta-hydroxyamino acids, producing glycine and aldehydes, via a retro-aldol mechanism. The sequence is that of Serine hydroxymethyltransferase from Sodalis glossinidius (strain morsitans).